Here is a 37-residue protein sequence, read N- to C-terminus: Cytochrome b6-f complex subunit 5 (37 aa).

A helical transmembrane segment spans residues 5-25; sequence LLSGIVLGLIPITLVGLFVTA.

It belongs to the PetG family. The 4 large subunits of the cytochrome b6-f complex are cytochrome b6, subunit IV (17 kDa polypeptide, PetD), cytochrome f and the Rieske protein, while the 4 small subunits are PetG, PetL, PetM and PetN. The complex functions as a dimer.

It is found in the plastid. The protein resides in the chloroplast thylakoid membrane. In terms of biological role, component of the cytochrome b6-f complex, which mediates electron transfer between photosystem II (PSII) and photosystem I (PSI), cyclic electron flow around PSI, and state transitions. PetG is required for either the stability or assembly of the cytochrome b6-f complex. The protein is Cytochrome b6-f complex subunit 5 of Welwitschia mirabilis (Tree tumbo).